The sequence spans 399 residues: LEM domain-containing protein Bocksbeutel (399 aa).

One can recognise an LEM domain in the interval 4–48; the sequence is LSYLDTLGNKELLAKCLEHGLPGVPVTDSTRSVIIRRLKAKITGV. Disordered stretches follow at residues 49 to 103, 119 to 141, and 233 to 287; these read PLNK…EQSR, SVQTTTTVSDMSSQSEDDDSYMV, and NSTS…SNLA. Composition is skewed to polar residues over residues 68-77 and 89-99; these read HGSQVTTPTS and GRTSSNNNKIS. Over residues 233–256 the composition is skewed to polar residues; the sequence is NSTSYEESSTYNPKLSPISPRNTF. A helical membrane pass occupies residues 377 to 397; that stretch reads FYLILVVSVMLATMVYVVLTP.

It is found in the nucleus inner membrane. It localises to the cytoplasm. The protein resides in the nucleus. Its subcellular location is the nucleoplasm. The protein localises to the endoplasmic reticulum. Functionally, inner nuclear membrane protein. May have a role in maintaining the structural integrity of the nuclear lamina. During pupal development, plays essential and redundant functions with the other LEM domain proteins; MAN1 and Ote. Also has a redundant but important role with Ote in larval development. This chain is LEM domain-containing protein Bocksbeutel, found in Drosophila melanogaster (Fruit fly).